The sequence spans 280 residues: Pyrethroid hydrolase (280 aa).

Active-site charge relay system residues include Asp-202 and His-230. The tract at residues 254–280 is disordered; sequence YRQTATKAGPDRPAGADGGRADRADLP.

This sequence belongs to the AB hydrolase superfamily. As to quaternary structure, monomer.

It carries out the reaction (-)-trans-permethrin + H2O = (3-phenoxyphenyl)methanol + (1S,3R)-3-(2,2-dichlorovinyl)-2,2-dimethylcyclopropanecarboxylate + H(+). Its function is as follows. Catalyzes the hydrolysis of pyrethroids pesticides. Catalyzes the hydrolysis of cypermethrin to equimolar amounts of cyano-3-phenoxybenzyl alcohol and 2,2-dimethyl-3-(2,2-dichlorovinyl)-cyclopropanecarboxylic acid. Hydrolyzes cis-permethrin at approximately equal rate to trans-permethrin. The chain is Pyrethroid hydrolase (pytH) from Sphingobium wenxiniae (strain DSM 21828 / CGMCC 1.7748 / JZ-1).